A 508-amino-acid chain; its full sequence is Steroid 17-alpha-hydroxylase/17,20 lyase (508 aa).

N202 provides a ligand contact to substrate. Position 442 (C442) interacts with heme.

Belongs to the cytochrome P450 family. Heme serves as cofactor.

The protein localises to the endoplasmic reticulum membrane. The protein resides in the microsome membrane. The enzyme catalyses a C21-steroid + reduced [NADPH--hemoprotein reductase] + O2 = a 17alpha-hydroxy-C21-steroid + oxidized [NADPH--hemoprotein reductase] + H2O + H(+). The catalysed reaction is progesterone + reduced [NADPH--hemoprotein reductase] + O2 = 17alpha-hydroxyprogesterone + oxidized [NADPH--hemoprotein reductase] + H2O + H(+). It catalyses the reaction pregnenolone + reduced [NADPH--hemoprotein reductase] + O2 = 17alpha-hydroxypregnenolone + oxidized [NADPH--hemoprotein reductase] + H2O + H(+). It carries out the reaction 17alpha-hydroxyprogesterone + reduced [NADPH--hemoprotein reductase] + O2 = androst-4-ene-3,17-dione + acetate + oxidized [NADPH--hemoprotein reductase] + H2O + 2 H(+). The enzyme catalyses 17alpha-hydroxyprogesterone + reduced [NADPH--hemoprotein reductase] + O2 = 16alpha,17alpha-dihydroxyprogesterone + oxidized [NADPH--hemoprotein reductase] + H2O + H(+). The catalysed reaction is 16alpha,17alpha-dihydroxyprogesterone + reduced [NADPH--hemoprotein reductase] + O2 = 6beta,16alpha,17alpha-trihydroxyprogesterone + oxidized [NADPH--hemoprotein reductase] + H2O + H(+). It catalyses the reaction 17alpha-hydroxypregnenolone + reduced [NADPH--hemoprotein reductase] + O2 = 3beta-hydroxyandrost-5-en-17-one + acetate + oxidized [NADPH--hemoprotein reductase] + H2O + 2 H(+). It carries out the reaction 16alpha,17alpha-dihydroxypregnenolone + reduced [NADPH--hemoprotein reductase] + O2 = 3beta,16alpha-dihydroxy-androst-5-en-17-one + acetate + oxidized [NADPH--hemoprotein reductase] + H2O + 2 H(+). The enzyme catalyses 3beta-hydroxyandrost-5-en-17-one + reduced [NADPH--hemoprotein reductase] + O2 = 3beta,16alpha-dihydroxy-androst-5-en-17-one + oxidized [NADPH--hemoprotein reductase] + H2O + H(+). The catalysed reaction is androst-4-ene-3,17-dione + reduced [NADPH--hemoprotein reductase] + O2 = 16alpha-hydroxyandrost-4-ene-3,17-dione + oxidized [NADPH--hemoprotein reductase] + H2O + H(+). It functions in the pathway steroid hormone biosynthesis. It participates in steroid biosynthesis; glucocorticoid biosynthesis. Its activity is regulated as follows. Regulated predominantly by intracellular cAMP levels. The 17,20-lyase activity is stimulated by cytochrome b5, which acts as an allosteric effector increasing the Vmax of the lyase activity. In terms of biological role, a cytochrome P450 monooxygenase involved in corticoid and androgen biosynthesis. Catalyzes 17-alpha hydroxylation of C21 steroids, which is common for both pathways. A second oxidative step, required only for androgen synthesis, involves an acyl-carbon cleavage. The 17-alpha hydroxy intermediates, as part of adrenal glucocorticoids biosynthesis pathway, are precursors of cortisol. Hydroxylates steroid hormones, pregnenolone and progesterone to form 17-alpha hydroxy metabolites, followed by the cleavage of the C17-C20 bond to form C19 steroids, dehydroepiandrosterone (DHEA) and androstenedione. Has 16-alpha hydroxylase activity. Catalyzes 16-alpha hydroxylation of 17-alpha hydroxy pregnenolone, followed by the cleavage of the C17-C20 bond to form 16-alpha-hydroxy DHEA. Also 16-alpha hydroxylates androgens, relevant for estriol synthesis. Mechanistically, uses molecular oxygen inserting one oxygen atom into a substrate, and reducing the second into a water molecule, with two electrons provided by NADPH via cytochrome P450 reductase (CPR; NADPH-ferrihemoprotein reductase). In Papio cynocephalus (Yellow baboon), this protein is Steroid 17-alpha-hydroxylase/17,20 lyase (CYP17A1).